A 279-amino-acid polypeptide reads, in one-letter code: Complement component 1 Q subcomponent-binding protein, mitochondrial (279 aa).

The N-terminal 71 residues, 1–71, are a transit peptide targeting the mitochondrion; sequence MLPLLRCVPR…PVPCACGCGA (71 aa). Residues 74–91 form a C1q binding region; sequence TEGDKAFVEFLTDEIKEE. Residues lysine 89 and lysine 92 each carry the N6-acetyllysine modification. Residues 134–162 are disordered; it reads NNSIPPTFDGEEEPSQGQKAEEQEPELTS. An interaction with MAVS region spans residues 166–210; it reads FVVEVTKTDGKKTLVLDCHYPEDEIGHEDEAESDIFSIKEVSFQT. Residue tyrosine 185 is modified to Phosphotyrosine. Residues serine 198 and serine 202 each carry the phosphoserine modification. Threonine 211 carries the post-translational modification Phosphothreonine.

The protein belongs to the MAM33 family. In terms of assembly, homotrimer; three monomers form a donut-shaped structure with an unusually asymmetric charge distribution on the surface. Interacts with CDK13, HRK, VTN, NFYB, ADRA1B, FOXC1, DDX21, DDX50, NCL, SRSF1 and SRSF9. Interacts with CD93; the association may represent a cell surface C1q receptor. Interacts with KRT1; the association represents a cell surface kininogen receptor. Interacts with CD209; the interaction is indicative for a C1q:C1QBP:CD209 signaling complex. Interacts with FBL and RRP1; the respective interactions with C1QBP are competitive. Probably associates with the mitoribosome. Interacts with MAVS; the interaction occurs upon viral transfection. Interacts with PPIF. Interacts with U2AF1L4. Interacts with PLEKHN1. Interacts with VGF-derived peptide TLQP-21. Interacts with MRE11 and RAD50; forming the MRC (MRE11-RAD50-C1QBP) complex that inhibits the activity of MRE11. As to expression, ubiquitous.

It localises to the mitochondrion matrix. It is found in the nucleus. The protein localises to the cell membrane. The protein resides in the secreted. Its subcellular location is the cytoplasm. It localises to the nucleolus. In terms of biological role, multifunctional and multicompartmental protein involved in inflammation and infection processes, ribosome biogenesis, protein synthesis in mitochondria, regulation of apoptosis, transcriptional regulation and pre-mRNA splicing. At the cell surface is thought to act as an endothelial receptor for plasma proteins of the complement and kallikrein-kinin cascades. Putative receptor for C1q; specifically binds to the globular 'heads' of C1q thus inhibiting C1; may perform the receptor function through a complex with C1qR/CD93. In complex with cytokeratin-1/KRT1 is a high affinity receptor for kininogen-1/HMWK. Can also bind other plasma proteins, such as coagulation factor XII leading to its autoactivation. May function to bind initially fluid kininogen-1 to the cell membrane. The secreted form may enhance both extrinsic and intrinsic coagulation pathways. It is postulated that the cell surface form requires docking with transmembrane proteins for downstream signaling which might be specific for a cell-type or response. By acting as C1q receptor is involved in chemotaxis of immature dendritic cells and neutrophils and is proposed to signal through CD209/DC-SIGN on immature dendritic cells, through integrin alpha-4/beta-1 during trophoblast invasion of the decidua, and through integrin beta-1 during endothelial cell adhesion and spreading. Signaling involved in inhibition of innate immune response is implicating the PI3K-AKT/PKB pathway. Required for protein synthesis in mitochondria. In mitochondrial translation may be involved in formation of functional 55S mitoribosomes; the function seems to involve its RNA-binding activity. Acts as a RNA modification reader, which specifically recognizes and binds mitochondrial RNAs modified by C5-methylcytosine (m5C) in response to stress, and promotes recruitment of the mitochondrial degradosome complex, leading to their degradation. May be involved in the nucleolar ribosome maturation process; the function may involve the exchange of FBL for RRP1 in the association with pre-ribosome particles. Involved in regulation of RNA splicing by inhibiting the RNA-binding capacity of SRSF1 and its phosphorylation. Is required for the nuclear translocation of splicing factor U2AF1L4. Involved in regulation of CDKN2A- and HRK-mediated apoptosis. Stabilizes mitochondrial CDKN2A isoform smARF. May be involved in regulation of FOXC1 transcriptional activity and NFY/CCAAT-binding factor complex-mediated transcription. May play a role in antibacterial defense as it can bind to cell surface hyaluronan and inhibit Streptococcus pneumoniae hyaluronate lyase. May be involved in modulation of the immune response; ligation by HCV core protein is resulting in suppression of interleukin-12 production in monocyte-derived dendritic cells. Involved in regulation of antiviral response by inhibiting RIGI- and IFIH1-mediated signaling pathways probably involving its association with MAVS after viral infection. Acts as a regulator of DNA repair via homologous recombination by inhibiting the activity of MRE11: interacts with unphosphorylated MRE11 and RAD50 in absence of DNA damage, preventing formation and activity of the MRN complex. Following DNA damage, dissociates from phosphorylated MRE11, allowing formation of the MRN complex. In Rattus norvegicus (Rat), this protein is Complement component 1 Q subcomponent-binding protein, mitochondrial (C1qbp).